Consider the following 338-residue polypeptide: Glyceraldehyde-3-phosphate dehydrogenase 1 (338 aa).

Residues T13–I14 and G111 each bind NAD(+). S140–N142 lines the D-glyceraldehyde 3-phosphate pocket. C141 (nucleophile) is an active-site residue. R169 contributes to the NAD(+) binding site. H195–G196 provides a ligand contact to D-glyceraldehyde 3-phosphate. Q300 contributes to the NAD(+) binding site.

Belongs to the glyceraldehyde-3-phosphate dehydrogenase family. In terms of assembly, homotetramer.

It localises to the cytoplasm. It carries out the reaction D-glyceraldehyde 3-phosphate + phosphate + NADP(+) = (2R)-3-phospho-glyceroyl phosphate + NADPH + H(+). The enzyme catalyses D-glyceraldehyde 3-phosphate + phosphate + NAD(+) = (2R)-3-phospho-glyceroyl phosphate + NADH + H(+). Its pathway is carbohydrate degradation; glycolysis; pyruvate from D-glyceraldehyde 3-phosphate: step 1/5. In Methanosarcina barkeri (strain Fusaro / DSM 804), this protein is Glyceraldehyde-3-phosphate dehydrogenase 1.